Consider the following 662-residue polypeptide: MAVLTHGSPTPSGAHFDGKGINFTLFSAHAEQVTLCLFDEQGQERQIAMPARTGDIWHGYLPGGKPGQRYGYRVSGPFEPSRGHRFNPHKLLIDPRTRALEGKVGDDPRFTGGVSQPDVRDSAAALPKCLVIHEEYDWQGDKPPAIPWGNTVIYEAHVRGLTQLHPDIPPELRGTYAALAHPALIEHLKTLGITTLELLPVQFHIDEPRLQKMGLSNYWGYNVLAPFAVDPDYASGREGISPLRELRDAVKALHNAGIEVILDVVFNHSAELDVFGPTLCQRGIDNASYYWLTPDGEYDNITGCGNALRLSHPYVTQWVIDCLNYWRDSCHVDGFRFDLGTVLGRTPAFDQHAPLFAALAADERLSACKLIAEPWDIGLGGYQLGNFPTGFSEWNDQYRDAMRGFWLRGEVPRGTFAQHFAASSRLFEQRGRLPSASINQITAHDGFTLLDLLCFNQKHNQMNGEENRDGSDNNHSNNFGCEGLVADAAIWQRRKACQRALLTTLLLSQGTPMLLAGDEQGHSQQGNNNAYCQNNILTWLDWGSADRALMTFTADLIRLRQQIPALTQDQWWQSGDSNVQWLDSQGQALSDAAWEQGCQQQLQILLSQRWLVLINATDHECEMHLPEGEWEGIPPFGVSDHAERLTTWRGSAHTICVLIKRD.

Asp338 functions as the Nucleophile in the catalytic mechanism. Glu373 (proton donor) is an active-site residue.

It belongs to the glycosyl hydrolase 13 family.

It carries out the reaction Hydrolysis of (1-&gt;6)-alpha-D-glucosidic linkages to branches with degrees of polymerization of three or four glucose residues in limit dextrin.. It functions in the pathway glycan degradation; glycogen degradation. Functionally, removes maltotriose and maltotetraose chains that are attached by 1,6-alpha-linkage to the limit dextrin main chain, generating a debranched limit dextrin. The sequence is that of Glycogen debranching enzyme from Yersinia pestis.